The primary structure comprises 131 residues: Profilin-10 (131 aa).

Residues Cys-13 and Cys-115 are joined by a disulfide bond. An Involved in PIP2 interaction motif is present at residues 81 to 97 (AVIRGKKGSGGITVKKT). Thr-111 is subject to Phosphothreonine.

This sequence belongs to the profilin family. As to quaternary structure, occurs in many kinds of cells as a complex with monomeric actin in a 1:1 ratio. Post-translationally, phosphorylated by MAP kinases.

Its subcellular location is the cytoplasm. It is found in the cytoskeleton. In terms of biological role, binds to actin and affects the structure of the cytoskeleton. At high concentrations, profilin prevents the polymerization of actin, whereas it enhances it at low concentrations. The chain is Profilin-10 from Zea mays (Maize).